Reading from the N-terminus, the 431-residue chain is Probable pectate lyase 1 (431 aa).

The N-terminal stretch at 1 to 20 (MAVLPTWLLAMMCLLFFVGA) is a signal peptide. N-linked (GlcNAc...) asparagine glycosylation is found at Asn-23, Asn-28, and Asn-65. Ca(2+) is bound by residues Asp-227, Asp-251, and Asp-255. Arg-307 is a catalytic residue.

The protein belongs to the polysaccharide lyase 1 family. It depends on Ca(2+) as a cofactor. Expressed in flowers, but not in leaves.

The enzyme catalyses Eliminative cleavage of (1-&gt;4)-alpha-D-galacturonan to give oligosaccharides with 4-deoxy-alpha-D-galact-4-enuronosyl groups at their non-reducing ends.. It functions in the pathway glycan metabolism; pectin degradation; 2-dehydro-3-deoxy-D-gluconate from pectin: step 2/5. The chain is Probable pectate lyase 1 from Arabidopsis thaliana (Mouse-ear cress).